We begin with the raw amino-acid sequence, 530 residues long: Phosphoenolpyruvate carboxykinase (ATP) (530 aa).

Substrate is bound by residues Arg-60, Tyr-195, and Lys-201. Residues Lys-201, His-221, and Gly-237–Thr-245 contribute to the ATP site. Positions 201 and 221 each coordinate Mn(2+). A Mn(2+)-binding site is contributed by Asp-258. ATP is bound by residues Glu-286, Arg-324, Arg-443–Ile-444, and Ser-449. Arg-324 lines the substrate pocket.

Belongs to the phosphoenolpyruvate carboxykinase (ATP) family. Mn(2+) serves as cofactor.

It is found in the cytoplasm. The catalysed reaction is oxaloacetate + ATP = phosphoenolpyruvate + ADP + CO2. It functions in the pathway carbohydrate biosynthesis; gluconeogenesis. Involved in the gluconeogenesis. Catalyzes the conversion of oxaloacetate (OAA) to phosphoenolpyruvate (PEP) through direct phosphoryl transfer between the nucleoside triphosphate and OAA. The sequence is that of Phosphoenolpyruvate carboxykinase (ATP) from Pelobacter propionicus (strain DSM 2379 / NBRC 103807 / OttBd1).